Consider the following 386-residue polypeptide: Dual-specificity RNA methyltransferase RlmN (386 aa).

The active-site Proton acceptor is Glu-94. The Radical SAM core domain maps to 100-341 (EENRGTLCIS…VTTIRKTRGD (242 aa)). A disulfide bridge links Cys-107 with Cys-347. Residues Cys-114, Cys-118, and Cys-121 each coordinate [4Fe-4S] cluster. S-adenosyl-L-methionine is bound by residues 173–174 (GE), Ser-205, 227–229 (SLH), and Asn-304. Residue Cys-347 is the S-methylcysteine intermediate of the active site.

It belongs to the radical SAM superfamily. RlmN family. Requires [4Fe-4S] cluster as cofactor.

It localises to the cytoplasm. The catalysed reaction is adenosine(2503) in 23S rRNA + 2 reduced [2Fe-2S]-[ferredoxin] + 2 S-adenosyl-L-methionine = 2-methyladenosine(2503) in 23S rRNA + 5'-deoxyadenosine + L-methionine + 2 oxidized [2Fe-2S]-[ferredoxin] + S-adenosyl-L-homocysteine. It catalyses the reaction adenosine(37) in tRNA + 2 reduced [2Fe-2S]-[ferredoxin] + 2 S-adenosyl-L-methionine = 2-methyladenosine(37) in tRNA + 5'-deoxyadenosine + L-methionine + 2 oxidized [2Fe-2S]-[ferredoxin] + S-adenosyl-L-homocysteine. In terms of biological role, specifically methylates position 2 of adenine 2503 in 23S rRNA and position 2 of adenine 37 in tRNAs. m2A2503 modification seems to play a crucial role in the proofreading step occurring at the peptidyl transferase center and thus would serve to optimize ribosomal fidelity. The polypeptide is Dual-specificity RNA methyltransferase RlmN (Herminiimonas arsenicoxydans).